Reading from the N-terminus, the 177-residue chain is Peptide deformylase 2 (177 aa).

Residues Cys-99 and His-141 each coordinate Fe cation. Residue Glu-142 is part of the active site. His-145 is a Fe cation binding site.

This sequence belongs to the polypeptide deformylase family. It depends on Fe(2+) as a cofactor.

The enzyme catalyses N-terminal N-formyl-L-methionyl-[peptide] + H2O = N-terminal L-methionyl-[peptide] + formate. Its function is as follows. Removes the formyl group from the N-terminal Met of newly synthesized proteins. Requires at least a dipeptide for an efficient rate of reaction. N-terminal L-methionine is a prerequisite for activity but the enzyme has broad specificity at other positions. This Ralstonia nicotianae (strain ATCC BAA-1114 / GMI1000) (Ralstonia solanacearum) protein is Peptide deformylase 2.